The following is a 298-amino-acid chain: Probable endonuclease 4 (298 aa).

Zn(2+) is bound by residues His69, His111, Glu146, Asp180, His183, His215, Asp228, His230, and Glu260.

Belongs to the AP endonuclease 2 family. It depends on Zn(2+) as a cofactor.

The catalysed reaction is Endonucleolytic cleavage to 5'-phosphooligonucleotide end-products.. Functionally, endonuclease IV plays a role in DNA repair. It cleaves phosphodiester bonds at apurinic or apyrimidinic (AP) sites, generating a 3'-hydroxyl group and a 5'-terminal sugar phosphate. In Bacillus cereus (strain B4264), this protein is Probable endonuclease 4.